A 216-amino-acid polypeptide reads, in one-letter code: 3-keto-L-gulonate-6-phosphate decarboxylase UlaD (216 aa).

A substrate-binding site is contributed by D11. Mg(2+) is bound by residues E33 and D62. R192 provides a ligand contact to substrate.

Belongs to the HPS/KGPDC family. KGPDC subfamily. As to quaternary structure, homodimer. It depends on Mg(2+) as a cofactor.

The enzyme catalyses 3-dehydro-L-gulonate 6-phosphate + H(+) = L-xylulose 5-phosphate + CO2. The protein operates within cofactor degradation; L-ascorbate degradation; D-xylulose 5-phosphate from L-ascorbate: step 2/4. Its function is as follows. Catalyzes the decarboxylation of 3-keto-L-gulonate-6-P into L-xylulose-5-P. Is involved in the anaerobic L-ascorbate utilization. The protein is 3-keto-L-gulonate-6-phosphate decarboxylase UlaD of Escherichia coli O139:H28 (strain E24377A / ETEC).